The primary structure comprises 1623 residues: ABC transporter C family member 2 (1623 aa).

9 helical membrane-spanning segments follow: residues 37–57, 76–96, 109–129, 145–165, 172–192, 336–356, 440–460, 527–547, and 557–577; these read FVLGISQLVLLVLCLYRIWLA, FLALLAAYATAEPLFRLIMGI, FEAFGLGVKAFAWGAVMVMIL, FAVIYALVGDMVLLNLVLSVK, VLYLYTSEVGAQVLFGILLFM, AWMGYIYAFSIFVGVVFGVLC, VASLIGALLLVLMFPLQTVII, FILNSIPVLVTIVSFGVFTLL, and FTSLSLFAVLRFPLFMLPNII. The region spanning 302 to 582 is the ABC transmembrane type-1 1 domain; that stretch reads FWWGGFWKIG…LPNIITQVVN (281 aa). Residues 614–838 enclose the ABC transporter 1 domain; that stretch reads ISIRNGYFSW…GPLFQRLMEN (225 aa). 649 to 656 is a binding site for ATP; that stretch reads GSTGEGKT. A disordered region spans residues 842-890; the sequence is VEEYSEENGEAEADQTAEQPVANGNTNGLQMDGSDDKKSKEGNKKGGKS. Acidic residues predominate over residues 845–856; the sequence is YSEENGEAEADQ. Over residues 857–870 the composition is skewed to polar residues; it reads TAEQPVANGNTNGL. Residues 875–885 are compositionally biased toward basic and acidic residues; the sequence is SDDKKSKEGNK. 6 helical membrane-spanning segments follow: residues 914-934, 955-975, 1032-1054, 1058-1077, 1143-1163, and 1177-1197; these read ALGGAWVVMMLLLCYVLTEVF, GPLFYNLIYALLSFGQVLVTL, AVFVNMFMGQVSQLLSTVVLIGI, LSLWAIMPLLVLFYGAYLYY, LGIRLETLGGLMIWLTASFAV, and STMGLLLSYALNITSLLTGVL. The 285-residue stretch at 921-1205 folds into the ABC transmembrane type-1 2 domain; sequence VMMLLLCYVL…VLRLASLAEN (285 aa). The segment at 1236-1251 is interaction with calmodulin and FKP42/TWD1; sequence WPSSGSIKFEDVVLRY. The ABC transporter 2 domain occupies 1242-1476; that stretch reads IKFEDVVLRY…EGSSFSKMVQ (235 aa). An ATP-binding site is contributed by 1276-1283; sequence GRTGAGKS.

It belongs to the ABC transporter superfamily. ABCC family. Conjugate transporter (TC 3.A.1.208) subfamily. In terms of assembly, interacts with FKBP42/TWD1 and probably with calmodulin (CaM). In terms of tissue distribution, ubiquitous, at low levels.

The protein resides in the vacuole membrane. The enzyme catalyses ATP + H2O + xenobioticSide 1 = ADP + phosphate + xenobioticSide 2.. Its activity is regulated as follows. Reciprocal promotion of DNP-GS and E(2)17betaG uptake. E(2)17betaG uptake is also stimulated by GSH and S-methyl-glutathione (S-methyl-GS), and, to a lower extent, by GSSG and C3G-GS. Metolachlor-GS and decyl-GS slightly inhibit E(2)17betaG uptake. Functionally, pump for glutathione S-conjugates. Mediates the transport of S-conjugates such as GSH, S-(2,4-dinitrophenyl)-glutathione (DNP-GS), GSSG, cyanidin 3-glucoside-GS (C3G-GS) and metolachlor-GS (MOC-GS), glucuronides such as 17-beta-estradiol 17-(beta-D-glucuronide) (E(2)17betaG), and of the chlorophyll catabolite such as B.napus nonfluorescent chlorophyll catabolite (Bn-NCC-1). This chain is ABC transporter C family member 2 (ABCC2), found in Arabidopsis thaliana (Mouse-ear cress).